The primary structure comprises 3344 residues: Genome polyprotein (3344 aa).

The Peptidase S30 domain maps to 408–547 (IVGNSKINYI…RSVYAKMDQY (140 aa)). Residues His-456, Asp-465, and Ser-499 each act as for P1 proteinase activity in the active site. An Involved in interaction with stylet and aphid transmission motif is present at residues 598–601 (KITC). The Involved in virions binding and aphid transmission motif lies at 856-858 (PTK). Residues 882–1004 (MYIAKKGYCY…DSEMKHYIVG (123 aa)) enclose the Peptidase C6 domain. Active-site for helper component proteinase activity residues include Cys-890 and His-963. Positions 1473 to 1625 (EIAHSPEREF…TQFPTKIVTE (153 aa)) constitute a Helicase ATP-binding domain. 1486–1493 (GAVGSGKS) lines the ATP pocket. Residues 1575-1578 (DECH) carry the DECH box motif. In terms of domain architecture, Helicase C-terminal spans 1644 to 1803 (DVTAFADNIL…GLPVMTHNVG (160 aa)). The Nuclear localization signal signature appears at 2134–2141 (KKGNKKGK). At Tyr-2156 the chain carries O-(5'-phospho-RNA)-tyrosine. Positions 2283 to 2499 (GKSLCQGMRN…LSWGALKVWE (217 aa)) constitute a Peptidase C4 domain. Residues His-2327, Asp-2362, and Cys-2431 each act as for nuclear inclusion protein A activity in the active site. A RdRp catalytic domain is found at 2761 to 2885 (WVYCDADGSQ…AIHPDHEHVL (125 aa)). Residues 3059-3093 (KNEAVDAGLNEKLKEKEKQKEKEKEKQKEKEKDGA) show a composition bias toward basic and acidic residues. The tract at residues 3059–3116 (KNEAVDAGLNEKLKEKEKQKEKEKEKQKEKEKDGASDGNDVSTSTKTGERDRDVNVGT) is disordered.

It belongs to the potyviridae genome polyprotein family. Interacts with host eIF4E protein (via cap-binding region); this interaction mediates the translation of the VPg-viral RNA conjugates. Part of a complex that comprises VPg, RNA, host EIF4E and EIF4G; this interaction mediates the translation of the VPg-viral RNA conjugates. In terms of processing, VPg is uridylylated by the polymerase and is covalently attached to the 5'-end of the genomic RNA. This uridylylated form acts as a nucleotide-peptide primer for the polymerase. Post-translationally, potyviral RNA is expressed as two polyproteins which undergo post-translational proteolytic processing. Genome polyprotein is processed by NIa-pro, P1 and HC-pro proteinases resulting in the production of at least ten individual proteins. P3N-PIPO polyprotein is cleaved by P1 and HC-pro proteinases resulting in the production of three individual proteins. The P1 proteinase and the HC-pro cleave only their respective C-termini autocatalytically. 6K1 is essential for proper proteolytic separation of P3 from CI.

Its subcellular location is the host cytoplasmic vesicle. It localises to the host nucleus. The protein localises to the virion. The catalysed reaction is RNA(n) + a ribonucleoside 5'-triphosphate = RNA(n+1) + diphosphate. It catalyses the reaction Hydrolyzes glutaminyl bonds, and activity is further restricted by preferences for the amino acids in P6 - P1' that vary with the species of potyvirus, e.g. Glu-Xaa-Xaa-Tyr-Xaa-Gln-|-(Ser or Gly) for the enzyme from tobacco etch virus. The natural substrate is the viral polyprotein, but other proteins and oligopeptides containing the appropriate consensus sequence are also cleaved.. It carries out the reaction Hydrolyzes a Gly-|-Gly bond at its own C-terminus, commonly in the sequence -Tyr-Xaa-Val-Gly-|-Gly, in the processing of the potyviral polyprotein.. Required for aphid transmission and also has proteolytic activity. Only cleaves a Gly-Gly dipeptide at its own C-terminus. Interacts with virions and aphid stylets. Acts as a suppressor of RNA-mediated gene silencing, also known as post-transcriptional gene silencing (PTGS), a mechanism of plant viral defense that limits the accumulation of viral RNAs. May have RNA-binding activity. Its function is as follows. Has helicase activity. It may be involved in replication. In terms of biological role, indispensable for virus replication. Functionally, mediates the cap-independent, EIF4E-dependent translation of viral genomic RNAs. Binds to the cap-binding site of host EIF4E and thus interferes with the host EIF4E-dependent mRNA export and translation. VPg-RNA directly binds EIF4E and is a template for transcription. Also forms trimeric complexes with EIF4E-EIF4G, which are templates for translation. Has RNA-binding and proteolytic activities. Its function is as follows. An RNA-dependent RNA polymerase that plays an essential role in the virus replication. In terms of biological role, involved in aphid transmission, cell-to-cell and systemis movement, encapsidation of the viral RNA and in the regulation of viral RNA amplification. The protein is Genome polyprotein of Carica papaya (Papaya).